A 226-amino-acid polypeptide reads, in one-letter code: Enolase-phosphatase E1 (226 aa).

It belongs to the HAD-like hydrolase superfamily. MasA/MtnC family. In terms of assembly, monomer. The cofactor is Mg(2+).

The catalysed reaction is 5-methylsulfanyl-2,3-dioxopentyl phosphate + H2O = 1,2-dihydroxy-5-(methylsulfanyl)pent-1-en-3-one + phosphate. It functions in the pathway amino-acid biosynthesis; L-methionine biosynthesis via salvage pathway; L-methionine from S-methyl-5-thio-alpha-D-ribose 1-phosphate: step 3/6. Its pathway is amino-acid biosynthesis; L-methionine biosynthesis via salvage pathway; L-methionine from S-methyl-5-thio-alpha-D-ribose 1-phosphate: step 4/6. Functionally, bifunctional enzyme that catalyzes the enolization of 2,3-diketo-5-methylthiopentyl-1-phosphate (DK-MTP-1-P) into the intermediate 2-hydroxy-3-keto-5-methylthiopentenyl-1-phosphate (HK-MTPenyl-1-P), which is then dephosphorylated to form the acireductone 1,2-dihydroxy-3-keto-5-methylthiopentene (DHK-MTPene). The protein is Enolase-phosphatase E1 of Shewanella frigidimarina (strain NCIMB 400).